The primary structure comprises 475 residues: SAM50-like protein SPAC17C9.06 (475 aa).

A POTRA domain is found at 44–130; it reads VGISSIRVTG…LDVTIQVKEK (87 aa).

The protein belongs to the SAM50/omp85 family. As to quaternary structure, associates with the mitochondrial contact site and cristae organizing system (MICOS) complex (also known as MINOS or MitOS complex).

The protein localises to the mitochondrion outer membrane. Functionally, may be required for the assembly pathway of mitochondrial outer membrane proteins. In Schizosaccharomyces pombe (strain 972 / ATCC 24843) (Fission yeast), this protein is SAM50-like protein SPAC17C9.06.